The following is a 485-amino-acid chain: Cobyric acid synthase (485 aa).

Residues 250-436 (RRIVACPILP…IHGLLASPAL (187 aa)) form the GATase cobBQ-type domain. Cysteine 332 functions as the Nucleophile in the catalytic mechanism. Residue histidine 428 is part of the active site.

The protein belongs to the CobB/CobQ family. CobQ subfamily.

It functions in the pathway cofactor biosynthesis; adenosylcobalamin biosynthesis. Catalyzes amidations at positions B, D, E, and G on adenosylcobyrinic A,C-diamide. NH(2) groups are provided by glutamine, and one molecule of ATP is hydrogenolyzed for each amidation. The protein is Cobyric acid synthase of Sphingopyxis alaskensis (strain DSM 13593 / LMG 18877 / RB2256) (Sphingomonas alaskensis).